The chain runs to 53 residues: Bowman-Birk type proteinase inhibitor II-4 (53 aa).

Intrachain disulfides connect cysteine 8-cysteine 23, cysteine 13-cysteine 21, cysteine 30-cysteine 37, and cysteine 34-cysteine 49.

This sequence belongs to the Bowman-Birk serine protease inhibitor family.

This chain is Bowman-Birk type proteinase inhibitor II-4, found in Triticum aestivum (Wheat).